The primary structure comprises 258 residues: UPF0246 protein VV1_0535 (258 aa).

It belongs to the UPF0246 family.

This Vibrio vulnificus (strain CMCP6) protein is UPF0246 protein VV1_0535.